The chain runs to 176 residues: MKIIAKKDLFINDEIRVREVRLVGLDGEQLGIKPLSEAQAIADDANVDLVLIQPQATPPVAKIMNYGKFKFEYQKKQKEQRKKQSVVTVKEVRLSPVIDKGDFETKLRNGRKFLEKGNKVKVSIRFRGRMITHKEIGAKVLAEFAEKTQDIAIIEQRAKMDGRQMFMQLAPIPDKK.

Belongs to the IF-3 family. Monomer.

It is found in the cytoplasm. Functionally, IF-3 binds to the 30S ribosomal subunit and shifts the equilibrium between 70S ribosomes and their 50S and 30S subunits in favor of the free subunits, thus enhancing the availability of 30S subunits on which protein synthesis initiation begins. This is Translation initiation factor IF-3 from Streptococcus thermophilus (strain ATCC BAA-491 / LMD-9).